The sequence spans 238 residues: 2-C-methyl-D-erythritol 4-phosphate cytidylyltransferase (238 aa).

This sequence belongs to the IspD/TarI cytidylyltransferase family. IspD subfamily.

The enzyme catalyses 2-C-methyl-D-erythritol 4-phosphate + CTP + H(+) = 4-CDP-2-C-methyl-D-erythritol + diphosphate. It functions in the pathway isoprenoid biosynthesis; isopentenyl diphosphate biosynthesis via DXP pathway; isopentenyl diphosphate from 1-deoxy-D-xylulose 5-phosphate: step 2/6. In terms of biological role, catalyzes the formation of 4-diphosphocytidyl-2-C-methyl-D-erythritol from CTP and 2-C-methyl-D-erythritol 4-phosphate (MEP). The chain is 2-C-methyl-D-erythritol 4-phosphate cytidylyltransferase from Shewanella amazonensis (strain ATCC BAA-1098 / SB2B).